The following is an 85-amino-acid chain: Large ribosomal subunit protein bL27 (85 aa).

The tract at residues 1–21 (MAHKKAGGSTRNGRDSEGKRL) is disordered.

The protein belongs to the bacterial ribosomal protein bL27 family.

The chain is Large ribosomal subunit protein bL27 from Hamiltonella defensa subsp. Acyrthosiphon pisum (strain 5AT).